Consider the following 142-residue polypeptide: Large ribosomal subunit protein uL13 (142 aa).

Belongs to the universal ribosomal protein uL13 family. In terms of assembly, part of the 50S ribosomal subunit.

In terms of biological role, this protein is one of the early assembly proteins of the 50S ribosomal subunit, although it is not seen to bind rRNA by itself. It is important during the early stages of 50S assembly. This chain is Large ribosomal subunit protein uL13, found in Burkholderia pseudomallei (strain 1106a).